A 445-amino-acid chain; its full sequence is Phosphoglucosamine mutase (445 aa).

Ser-100 serves as the catalytic Phosphoserine intermediate. Residues Ser-100, Asp-240, Asp-242, and Asp-244 each contribute to the Mg(2+) site. Ser-100 carries the phosphoserine modification.

This sequence belongs to the phosphohexose mutase family. Requires Mg(2+) as cofactor. In terms of processing, activated by phosphorylation.

The enzyme catalyses alpha-D-glucosamine 1-phosphate = D-glucosamine 6-phosphate. Catalyzes the conversion of glucosamine-6-phosphate to glucosamine-1-phosphate. This is Phosphoglucosamine mutase from Pelotomaculum thermopropionicum (strain DSM 13744 / JCM 10971 / SI).